Reading from the N-terminus, the 280-residue chain is Shikimate dehydrogenase (NADP(+)) (280 aa).

Shikimate contacts are provided by residues Ser-20–Ser-22 and Thr-67. Lys-71 (proton acceptor) is an active-site residue. An NADP(+)-binding site is contributed by Glu-83. Asn-92 and Asp-107 together coordinate shikimate. NADP(+)-binding positions include Gly-131–Ala-135, Asn-155–Lys-160, and Leu-224. Tyr-226 is a shikimate binding site. Position 247 (Gly-247) interacts with NADP(+).

It belongs to the shikimate dehydrogenase family. In terms of assembly, homodimer.

It catalyses the reaction shikimate + NADP(+) = 3-dehydroshikimate + NADPH + H(+). The protein operates within metabolic intermediate biosynthesis; chorismate biosynthesis; chorismate from D-erythrose 4-phosphate and phosphoenolpyruvate: step 4/7. Involved in the biosynthesis of the chorismate, which leads to the biosynthesis of aromatic amino acids. Catalyzes the reversible NADPH linked reduction of 3-dehydroshikimate (DHSA) to yield shikimate (SA). In Caldanaerobacter subterraneus subsp. tengcongensis (strain DSM 15242 / JCM 11007 / NBRC 100824 / MB4) (Thermoanaerobacter tengcongensis), this protein is Shikimate dehydrogenase (NADP(+)).